Reading from the N-terminus, the 259-residue chain is NAD kinase (259 aa).

The active-site Proton acceptor is aspartate 43. NAD(+)-binding positions include 43–44, 111–112, and arginine 136; these read DG and NE.

The protein belongs to the NAD kinase family. A divalent metal cation serves as cofactor.

It is found in the cytoplasm. It carries out the reaction NAD(+) + ATP = ADP + NADP(+) + H(+). Involved in the regulation of the intracellular balance of NAD and NADP, and is a key enzyme in the biosynthesis of NADP. Catalyzes specifically the phosphorylation on 2'-hydroxyl of the adenosine moiety of NAD to yield NADP. The chain is NAD kinase from Mycoplasma pneumoniae (strain ATCC 29342 / M129 / Subtype 1) (Mycoplasmoides pneumoniae).